We begin with the raw amino-acid sequence, 30 residues long: Glucagon-like peptide (30 aa).

R30 carries the post-translational modification Arginine amide.

It belongs to the glucagon family.

It is found in the secreted. The polypeptide is Glucagon-like peptide (Anguilla anguilla (European freshwater eel)).